A 250-amino-acid chain; its full sequence is Maleate isomerase (250 aa).

Substrate contacts are provided by residues Asn-15, 80–82 (CLV), Tyr-137, and Asn-167. Cys-80 acts as the Nucleophile in catalysis. Cys-80 is subject to S-(2-succinyl)cysteine. The Proton donor role is filled by Cys-198. A substrate-binding site is contributed by 199–200 (VQ).

The protein belongs to the maleate isomerase family. Homodimer.

It carries out the reaction maleate = fumarate. It participates in cofactor degradation; nicotinate degradation. In terms of biological role, catalyzes cis-trans isomerization of the C2-C3 double bond in maleate to yield fumarate in the aerobic nicotinate degradation pathway. This is Maleate isomerase from Pseudomonas putida (strain ATCC 47054 / DSM 6125 / CFBP 8728 / NCIMB 11950 / KT2440).